The sequence spans 119 residues: Large ribosomal subunit protein uL18 (119 aa).

This sequence belongs to the universal ribosomal protein uL18 family. As to quaternary structure, part of the 50S ribosomal subunit; part of the 5S rRNA/L5/L18/L25 subcomplex. Contacts the 5S and 23S rRNAs.

In terms of biological role, this is one of the proteins that bind and probably mediate the attachment of the 5S RNA into the large ribosomal subunit, where it forms part of the central protuberance. This Xanthomonas campestris pv. campestris (strain 8004) protein is Large ribosomal subunit protein uL18.